Here is a 153-residue protein sequence, read N- to C-terminus: NADPH-dependent 7-cyano-7-deazaguanine reductase (153 aa).

Residues 1-22 (MTDNRYDNLGQLGTSTPLPDNP) are disordered. Catalysis depends on C51, which acts as the Thioimide intermediate. D58 serves as the catalytic Proton donor. Substrate-binding positions include 73–75 (VES) and 92–93 (HE).

This sequence belongs to the GTP cyclohydrolase I family. QueF type 1 subfamily.

It localises to the cytoplasm. It carries out the reaction 7-aminomethyl-7-carbaguanine + 2 NADP(+) = 7-cyano-7-deazaguanine + 2 NADPH + 3 H(+). It functions in the pathway tRNA modification; tRNA-queuosine biosynthesis. Functionally, catalyzes the NADPH-dependent reduction of 7-cyano-7-deazaguanine (preQ0) to 7-aminomethyl-7-deazaguanine (preQ1). This is NADPH-dependent 7-cyano-7-deazaguanine reductase from Maricaulis maris (strain MCS10) (Caulobacter maris).